A 717-amino-acid polypeptide reads, in one-letter code: MSGDAAAEQAAEYVPEKVKKAEKKLEENPYDLDAWSILIREAQNQPIDKARKTYERLVAQFPSSGRFWKLYIEAEIKAKNYDKVEKLFQRCLMKVLHIDLWKCYLSYVRETKGKLPSYKEKMAQAYDFALDKIGMEIMSYQIWVDYINFLKGVEAVGSYAENQRITAVRRVYQRGCVNPMINIEQLWRDYNKYEEGINIHLAKKMIEDRSRDYMNARRVAKEYETVMKGLDRNAPSVPPQNTPQEAQQVDMWKKYIQWEKSNPLRTEDQTLITKRVMFAYEQCLLVLGHHPDIWYEAAQYLEQSSKLLAEKGDMNNAKLFSDEAANIYERAISTLLKKNMLLYFAYADYEESRMKYEKVHSIYNRLLAIEDIDPTLVYIQYMKFARRAEGIKSGRMIFKKAREDARTRHHVYVTAALMEYYCSKDKSVAFKIFELGLKKYGDIPEYVLAYIDYLSHLNEDNNTRVLFERVLTSGSLPPEKSGEIWARFLAFESNIGDLASILKVEKRRFTAFREEYEGKETALLVDRYKFMDLYPCSASELKALGYKDVSRAKLAAIIPDPVVAPSIVPVLKDEVDRKPEYPKPDTQQMIPFQPRHLAPPGLHPVPGGVFPVPPAAVVLMKLLPPPICFQGPFVQVDELMEIFRRCKIPNTVEEAVRIITGGAPELAVEGNGPVESSAVLTKAVKRPNEDSDEDEEKGAVVPPVHDIYRARQQKRIR.

An N-acetylserine modification is found at S2. 9 HAT repeats span residues 45–77 (QPID…AEIK), 79–110 (KNYD…YVRE), 117–152 (SYKE…FLKG), 163–196 (QRIT…YEEG), 221–261 (KEYE…WEKS), 271–303 (LITK…YLEQ), 319–352 (LFSD…YEES), 354–387 (MKYE…FARR), and 458–494 (NEDN…FESN). The disordered stretch occupies residues 683–704 (AVKRPNEDSDEDEEKGAVVPPV). Residue S691 is modified to Phosphoserine.

In terms of assembly, homodimer. The CSTF complex is composed of CSTF1 (50 kDa subunit), CSTF2 (64 kDa subunit) and CSTF3 (77 kDa subunit). CSTF3 directly interacts with CSTF1 and CSTF2. Interacts with FIP1L1.

It localises to the nucleus. Functionally, one of the multiple factors required for polyadenylation and 3'-end cleavage of mammalian pre-mRNAs. This chain is Cleavage stimulation factor subunit 3 (Cstf3), found in Mus musculus (Mouse).